The sequence spans 901 residues: MVNPVGSSKLEQNNIKSIIGSSYNRLYSQFTSDELTEVGNYKILKQIGEGSFGKVYLALHRPTHRKVCLKTSDKNDPNIVREVFYHRQFDFPYITKLYEVIVTESKVWMALEYCPGKELYDHLLSLRRISLLECGELFAQISGAVYYAHSMHCVHRDLKLENILLDKNGNAKLTDFGFTRECMTKTTLETVCGTTVYMAPELIERRTYDGFKIDIWSLGVILYTLITGYLPFDDDDEAKTKWKIVNEEPKYDAKVIPDDARDLISRLLAKNPGERPSLSQVLRHPFLQPYGSVVLDQTQKILCRQRSGGTQFKSKLERRLLKRLKQSGVDTQAIKQSILKKKCDSLSGLWLLLLAQGKKQENCKYPKRSRSVLSVKKVIESATHNDTNGISEDVLKPSLELSRAASLSKMLNKGSDFVTSMTPVSRKKSKDSAKVLNPTLSKISSQRAYSHSIAGSPRKSNNFLQKVSSFFKSKKSSNSNSNNSIHTNVSESLIASNRGAPSSGSFLKKNSGSIQKSRTDTVANPSRTESIGSLNENVAGAIVPRSANNTTLENKKTSGNEIGLKVAPELLLNEHIRIEEPRLKRFKSSISSEISQTSTGNYDSESAENSRSISFDGKVSPPPIRNRPLSEISQISNDTYISEYSTDGNNSSFKISDTIKPSYIRKGSETTSQYSASSEKMTNGYGRKFVRRDLSIVSTASSTSERSSRTDSFYDITTATPVVTTDNRRNKNNNLKESVLPRFGTQRPWTGKRTYTTSRHGKNARRSSKRGLFKITSSNTDSIIQEVSSSEEEDHNVIYSKGKGLPTPVLQTKGLIENGLNERDEEGDDEYAIHTDGEFSIKPQFSDDVIDKQNHLPSVKAVATKRSLSEGSNWSSSYLDSDNNRRRVSSLLVEDGGNPTA.

Residues 41 to 287 enclose the Protein kinase domain; that stretch reads YKILKQIGEG…LSQVLRHPFL (247 aa). ATP is bound by residues 47–55 and Lys70; that span reads IGEGSFGKV. The Proton acceptor role is filled by Asp157. The residue at position 456 (Ser456) is a Phosphoserine. The interval 500–530 is disordered; that stretch reads APSSGSFLKKNSGSIQKSRTDTVANPSRTES. A Phosphoserine modification is found at Ser533. Positions 588 to 599 are enriched in low complexity; that stretch reads SSISSEISQTST. Disordered stretches follow at residues 588–629 and 745–770; these read SSIS…NRPL and TQRP…SSKR. Positions 600 to 613 are enriched in polar residues; the sequence is GNYDSESAENSRSI. A compositionally biased stretch (basic residues) spans 759–770; sequence RHGKNARRSSKR.

The protein belongs to the protein kinase superfamily. Ser/Thr protein kinase family.

The catalysed reaction is L-seryl-[protein] + ATP = O-phospho-L-seryl-[protein] + ADP + H(+). It catalyses the reaction L-threonyl-[protein] + ATP = O-phospho-L-threonyl-[protein] + ADP + H(+). In terms of biological role, putative serine/threonine-protein kinase. The protein is Putative serine/threonine-protein kinase YPL150W of Saccharomyces cerevisiae (strain ATCC 204508 / S288c) (Baker's yeast).